A 183-amino-acid chain; its full sequence is 2-C-methyl-D-erythritol 2,4-cyclodiphosphate synthase (183 aa).

A divalent metal cation is bound by residues aspartate 8 and histidine 10. 4-CDP-2-C-methyl-D-erythritol 2-phosphate contacts are provided by residues 8 to 10 (DVH) and 34 to 35 (HS). Histidine 42 contributes to the a divalent metal cation binding site. 4-CDP-2-C-methyl-D-erythritol 2-phosphate is bound by residues 56-58 (DIG), 61-65 (FPDTD), 132-135 (TTEE), and phenylalanine 139.

The protein belongs to the IspF family. As to quaternary structure, homotrimer. Requires a divalent metal cation as cofactor.

It catalyses the reaction 4-CDP-2-C-methyl-D-erythritol 2-phosphate = 2-C-methyl-D-erythritol 2,4-cyclic diphosphate + CMP. It participates in isoprenoid biosynthesis; isopentenyl diphosphate biosynthesis via DXP pathway; isopentenyl diphosphate from 1-deoxy-D-xylulose 5-phosphate: step 4/6. Functionally, involved in the biosynthesis of isopentenyl diphosphate (IPP) and dimethylallyl diphosphate (DMAPP), two major building blocks of isoprenoid compounds. Catalyzes the conversion of 4-diphosphocytidyl-2-C-methyl-D-erythritol 2-phosphate (CDP-ME2P) to 2-C-methyl-D-erythritol 2,4-cyclodiphosphate (ME-CPP) with a corresponding release of cytidine 5-monophosphate (CMP). The protein is 2-C-methyl-D-erythritol 2,4-cyclodiphosphate synthase of Lachnospira eligens (strain ATCC 27750 / DSM 3376 / VPI C15-48 / C15-B4) (Eubacterium eligens).